The following is a 167-amino-acid chain: NADH-quinone oxidoreductase subunit B (167 aa).

[4Fe-4S] cluster contacts are provided by C40, C41, C105, and C134.

It belongs to the complex I 20 kDa subunit family. NDH-1 is composed of 14 different subunits. Subunits NuoB, C, D, E, F, and G constitute the peripheral sector of the complex. [4Fe-4S] cluster is required as a cofactor.

It localises to the cell inner membrane. The catalysed reaction is a quinone + NADH + 5 H(+)(in) = a quinol + NAD(+) + 4 H(+)(out). Functionally, NDH-1 shuttles electrons from NADH, via FMN and iron-sulfur (Fe-S) centers, to quinones in the respiratory chain. The immediate electron acceptor for the enzyme in this species is believed to be ubiquinone. Couples the redox reaction to proton translocation (for every two electrons transferred, four hydrogen ions are translocated across the cytoplasmic membrane), and thus conserves the redox energy in a proton gradient. The chain is NADH-quinone oxidoreductase subunit B from Campylobacter jejuni subsp. jejuni serotype O:2 (strain ATCC 700819 / NCTC 11168).